Here is a 186-residue protein sequence, read N- to C-terminus: Alkyl hydroperoxide reductase AhpD (186 aa).

C131 acts as the Proton donor in catalysis. C131 and C134 are joined by a disulfide. C134 (cysteine sulfenic acid (-SOH) intermediate) is an active-site residue.

Belongs to the AhpD family.

It carries out the reaction N(6)-[(R)-dihydrolipoyl]-L-lysyl-[lipoyl-carrier protein] + a hydroperoxide = N(6)-[(R)-lipoyl]-L-lysyl-[lipoyl-carrier protein] + an alcohol + H2O. In terms of biological role, antioxidant protein with alkyl hydroperoxidase activity. Required for the reduction of the AhpC active site cysteine residues and for the regeneration of the AhpC enzyme activity. The polypeptide is Alkyl hydroperoxide reductase AhpD (Rhodospirillum centenum (strain ATCC 51521 / SW)).